Consider the following 103-residue polypeptide: Small ribosomal subunit protein uS10 (103 aa).

It belongs to the universal ribosomal protein uS10 family. In terms of assembly, part of the 30S ribosomal subunit.

Involved in the binding of tRNA to the ribosomes. The sequence is that of Small ribosomal subunit protein uS10 from Baumannia cicadellinicola subsp. Homalodisca coagulata.